A 285-amino-acid polypeptide reads, in one-letter code: V-set and transmembrane domain-containing protein 2B (285 aa).

The signal sequence occupies residues 1–28; it reads MEQRNRLGALGYLLPLLLHSLLLFVADA. In terms of domain architecture, Ig-like V-type spans 29–143; the sequence is TFTEVPKDVT…DDDTQEHKAQ (115 aa). Residues 29–263 lie on the Extracellular side of the membrane; sequence TFTEVPKDVT…HGSGTGPGYS (235 aa). A disulfide bridge connects residues cysteine 49 and cysteine 127. A disordered region spans residues 160 to 225; the sequence is AEAVSHIQSS…AAAAAASATH (66 aa). 2 stretches are compositionally biased toward low complexity: residues 176-189 and 208-225; these read ASSAVSSNNAGAAV and PAGSGVPEAAAAAASATH. Residues 264-284 form a helical membrane-spanning segment; it reads ADPLLSLLLLALHKFLHPLLG. Histidine 285 is a topological domain (cytoplasmic).

The protein resides in the membrane. The polypeptide is V-set and transmembrane domain-containing protein 2B (Vstm2b) (Mus musculus (Mouse)).